Consider the following 102-residue polypeptide: RNA-binding protein Hfq (102 aa).

The Sm domain maps to 9–68; sequence DPFLNALRRERVPVSIYLVNGIKLQGQIESFDQFVILLKNTVSQMVYKHAISTVVPSRPV. The interval 63-102 is disordered; it reads VPSRPVSHHSNNAGGGTSNNYHHGSNAQGSGAQQDSEETE. Positions 70 to 96 are enriched in polar residues; it reads HHSNNAGGGTSNNYHHGSNAQGSGAQQ.

This sequence belongs to the Hfq family. As to quaternary structure, homohexamer.

Functionally, RNA chaperone that binds small regulatory RNA (sRNAs) and mRNAs to facilitate mRNA translational regulation in response to envelope stress, environmental stress and changes in metabolite concentrations. Also binds with high specificity to tRNAs. The protein is RNA-binding protein Hfq of Salmonella arizonae (strain ATCC BAA-731 / CDC346-86 / RSK2980).